We begin with the raw amino-acid sequence, 97 residues long: DNA replication protein 1 (97 aa).

The stretch at 49-78 (IELEKKMTKLEHENKLMKNALYELSRMENN) forms a coiled coil.

Belongs to the phi29likevirus DNA replication protein 1 family. As to quaternary structure, homomultimer. Self-associates into large complexes forming long filamentous structures. Interacts (via N-terminus) with the primer terminal protein.

Its subcellular location is the host membrane. In terms of biological role, protein that assembles into highly ordered structures and provides a specific site for viral DNA replication. Probably anchors the viral DNA replisome to the host membrane. In Bacillus subtilis (Bacteriophage PZA), this protein is DNA replication protein 1 (1C).